We begin with the raw amino-acid sequence, 495 residues long: Histidine--tRNA ligase (495 aa).

The protein belongs to the class-II aminoacyl-tRNA synthetase family. As to quaternary structure, homodimer.

Its subcellular location is the cytoplasm. The catalysed reaction is tRNA(His) + L-histidine + ATP = L-histidyl-tRNA(His) + AMP + diphosphate + H(+). This is Histidine--tRNA ligase from Bartonella henselae (strain ATCC 49882 / DSM 28221 / CCUG 30454 / Houston 1) (Rochalimaea henselae).